The sequence spans 78 residues: Acyl carrier protein (78 aa).

Residues 2 to 77 enclose the Carrier domain; sequence SDSAEKVKKI…DAIDYIEANK (76 aa). An O-(pantetheine 4'-phosphoryl)serine modification is found at S37.

This sequence belongs to the acyl carrier protein (ACP) family. Post-translationally, 4'-phosphopantetheine is transferred from CoA to a specific serine of apo-ACP by AcpS. This modification is essential for activity because fatty acids are bound in thioester linkage to the sulfhydryl of the prosthetic group.

It localises to the cytoplasm. It participates in lipid metabolism; fatty acid biosynthesis. Its function is as follows. Carrier of the growing fatty acid chain in fatty acid biosynthesis. The polypeptide is Acyl carrier protein (Sphingopyxis alaskensis (strain DSM 13593 / LMG 18877 / RB2256) (Sphingomonas alaskensis)).